We begin with the raw amino-acid sequence, 551 residues long: Tetrachloroethene reductive dehalogenase (551 aa).

Residues 1-39 (MGEINRRNFLKASMLGAAAAAVASASAVKGMVSPLVADA) constitute a signal peptide (tat-type signal). The 4Fe-4S ferredoxin-type 1 domain maps to 411–440 (PRKFGVREFCRLCKKCADACPAQAISHEKD). [4Fe-4S] cluster-binding residues include C420, C423, C426, C430, C467, C478, C481, and C485. A 4Fe-4S ferredoxin-type 2 domain is found at 478–496 (CANCVAVCSWNKVETWNHD).

It belongs to the PceA family. In terms of assembly, monomer. [4Fe-4S] cluster is required as a cofactor. Corrinoid serves as cofactor. In terms of processing, predicted to be exported by the Tat system. The position of the signal peptide cleavage has been experimentally proven.

It localises to the cell membrane. It carries out the reaction trichloroethene + chloride + A + H(+) = tetrachloroethene + AH2. It catalyses the reaction trichloroethene + AH2 = (Z)-1,2-dichloroethene + chloride + A + H(+). With respect to regulation, activity is inhibited by ammonium ions. Photoreversibly inactivated by 1-iodopropane. In terms of biological role, catalyzes the reductive dechlorination of tetrachloroethene (PCE) to trichloroethene (TCE) and of trichloroethene to cis-1,2-dichloroethene (DCE). Can also use trichlorofluoroethene, tetrachloromethane, hexachloroethane, tetrachloroethane, trichloroethane and 1,1,1-trichloro-2,2,2-trifluoroethane. Menaquinone can act as the electron donor. Reduced methyl viologen can act as the artificial electron donor. The protein is Tetrachloroethene reductive dehalogenase of Dehalobacter restrictus (strain DSM 9455 / PER-K23).